Consider the following 225-residue polypeptide: tRNA (guanine-N(1)-)-methyltransferase (225 aa).

Residues Gly-112 and 132–137 each bind S-adenosyl-L-methionine; that span reads IGDYVL.

The protein belongs to the RNA methyltransferase TrmD family. Homodimer.

The protein localises to the cytoplasm. It catalyses the reaction guanosine(37) in tRNA + S-adenosyl-L-methionine = N(1)-methylguanosine(37) in tRNA + S-adenosyl-L-homocysteine + H(+). Its function is as follows. Specifically methylates guanosine-37 in various tRNAs. The polypeptide is tRNA (guanine-N(1)-)-methyltransferase (Bacteroides thetaiotaomicron (strain ATCC 29148 / DSM 2079 / JCM 5827 / CCUG 10774 / NCTC 10582 / VPI-5482 / E50)).